Consider the following 88-residue polypeptide: Small ribosomal subunit protein bS20 (88 aa).

It belongs to the bacterial ribosomal protein bS20 family.

Functionally, binds directly to 16S ribosomal RNA. The sequence is that of Small ribosomal subunit protein bS20 from Aromatoleum aromaticum (strain DSM 19018 / LMG 30748 / EbN1) (Azoarcus sp. (strain EbN1)).